We begin with the raw amino-acid sequence, 179 residues long: UPF0302 protein YpiB (179 aa).

This sequence belongs to the UPF0302 family.

This is UPF0302 protein YpiB (ypiB) from Bacillus subtilis (strain 168).